The sequence spans 590 residues: Probable lysine-specific demethylase 4B (590 aa).

Residues 9–51 (IKVFRPTWEEFKDFPKYVAYMESQGAHKAGLAKVVPPPEWVPR) enclose the JmjN domain. 2-oxoglutarate is bound at residue Y130. In terms of domain architecture, JmjC spans 140–306 (DTDQDSWNIN…YGKRAVQCTC (167 aa)). H186 and E188 together coordinate Fe cation. Positions 196 and 204 each coordinate 2-oxoglutarate. 2 residues coordinate Zn(2+): C232 and H238. K239 provides a ligand contact to 2-oxoglutarate. H274 is a Fe cation binding site. C304 and C306 together coordinate Zn(2+). Disordered stretches follow at residues 372–395 (PTKAKSFKERNPDLDLDEIQQNPN) and 417–590 (ATDE…TASP). The span at 445 to 458 (EYIDDGTEDDDEEE) shows a compositional bias: acidic residues. Positions 480–494 (SKRKTNSRNNRGRSP) are enriched in basic residues. 2 stretches are compositionally biased toward low complexity: residues 502-513 (ISPASSTSSTSR) and 537-571 (TTSPAVSSAATAVKTPTSAVVAGTTSIATTTTPPA).

The protein belongs to the JHDM3 histone demethylase family. Fe(2+) is required as a cofactor.

The protein localises to the nucleus. The enzyme catalyses N(6),N(6),N(6)-trimethyl-L-lysyl(9)-[histone H3] + 2 2-oxoglutarate + 2 O2 = N(6)-methyl-L-lysyl(9)-[histone H3] + 2 formaldehyde + 2 succinate + 2 CO2. Probable histone demethylase that specifically demethylates 'Lys-9' and 'Lys-36' residues of histone H3, thereby playing a central role in histone code. Demethylation of Lys residue generates formaldehyde and succinate. The sequence is that of Probable lysine-specific demethylase 4B (Kdm4B) from Drosophila melanogaster (Fruit fly).